A 149-amino-acid chain; its full sequence is uncharacterized protein (149 aa).

The helical transmembrane segment at 124 to 144 threads the bilayer; the sequence is IIIIALIIILANYAPSIIGKI.

Belongs to the M.jannaschii MJ0023/MJ0349/MJ1072/MJ1074/MJ1107/MJECL16 family.

The protein localises to the membrane. This is an uncharacterized protein from Methanocaldococcus jannaschii (strain ATCC 43067 / DSM 2661 / JAL-1 / JCM 10045 / NBRC 100440) (Methanococcus jannaschii).